Here is a 670-residue protein sequence, read N- to C-terminus: Leiomodin-3 (670 aa).

Disordered regions lie at residues 34–72, 94–120, 139–165, and 202–274; these read EMDD…EEID, EIAP…GSFD, EEER…EDKV, and EDKV…NWVP. 5 stretches are compositionally biased toward basic and acidic residues: residues 40 to 63, 97 to 112, 153 to 163, 205 to 214, and 249 to 261; these read PDER…RDCT, PDER…DQTD, TNEEHEAKNED, VCDKPVKTDL, and TETK…KEDS. A coiled-coil region spans residues 150–183; sequence SQKTNEEHEAKNEDKVEELELVYEEIVEEVEGGQ. The stretch at 464 to 494 forms a coiled coil; sequence DRQRQQRMEEQKLQQMKEQRKVMEMYEDSLN. A disordered region spans residues 517-556; that stretch reads NGAEDIPEDSPEPSPQPSPPHQLCKTQHLAPQQHPPNLST. The WH2 domain maps to 637-656; the sequence is PRDHLLSEIRQSNVAYLKAV.

This sequence belongs to the tropomodulin family. Expressed in muscle (at protein level).

The protein localises to the cytoplasm. The protein resides in the myofibril. It localises to the sarcomere. Its subcellular location is the a band. It is found in the m line. The protein localises to the cytoskeleton. Its function is as follows. Essential for the organization of sarcomeric thin filaments in skeletal muscle. In Danio rerio (Zebrafish), this protein is Leiomodin-3.